A 476-amino-acid chain; its full sequence is Glycogen synthase (476 aa).

K15 provides a ligand contact to ADP-alpha-D-glucose.

It belongs to the glycosyltransferase 1 family. Bacterial/plant glycogen synthase subfamily.

It catalyses the reaction [(1-&gt;4)-alpha-D-glucosyl](n) + ADP-alpha-D-glucose = [(1-&gt;4)-alpha-D-glucosyl](n+1) + ADP + H(+). The protein operates within glycan biosynthesis; glycogen biosynthesis. Functionally, synthesizes alpha-1,4-glucan chains using ADP-glucose. This chain is Glycogen synthase, found in Lactobacillus acidophilus (strain ATCC 700396 / NCK56 / N2 / NCFM).